Consider the following 85-residue polypeptide: Cell division topological specificity factor (85 aa).

Belongs to the MinE family.

Its function is as follows. Prevents the cell division inhibition by proteins MinC and MinD at internal division sites while permitting inhibition at polar sites. This ensures cell division at the proper site by restricting the formation of a division septum at the midpoint of the long axis of the cell. This chain is Cell division topological specificity factor, found in Shewanella oneidensis (strain ATCC 700550 / JCM 31522 / CIP 106686 / LMG 19005 / NCIMB 14063 / MR-1).